A 130-amino-acid chain; its full sequence is Dihydroneopterin aldolase (130 aa).

Residues Glu-22, Tyr-54, and 73-74 (IE) each bind substrate. Catalysis depends on Lys-100, which acts as the Proton donor/acceptor.

Belongs to the DHNA family.

The enzyme catalyses 7,8-dihydroneopterin = 6-hydroxymethyl-7,8-dihydropterin + glycolaldehyde. Its pathway is cofactor biosynthesis; tetrahydrofolate biosynthesis; 2-amino-4-hydroxy-6-hydroxymethyl-7,8-dihydropteridine diphosphate from 7,8-dihydroneopterin triphosphate: step 3/4. In terms of biological role, catalyzes the conversion of 7,8-dihydroneopterin to 6-hydroxymethyl-7,8-dihydropterin. This chain is Dihydroneopterin aldolase (folB), found in Methylorubrum extorquens (strain ATCC 14718 / DSM 1338 / JCM 2805 / NCIMB 9133 / AM1) (Methylobacterium extorquens).